The primary structure comprises 73 residues: Large ribosomal subunit protein bL31 (73 aa).

Residues C16, C18, C37, and C40 each coordinate Zn(2+).

Belongs to the bacterial ribosomal protein bL31 family. Type A subfamily. In terms of assembly, part of the 50S ribosomal subunit. It depends on Zn(2+) as a cofactor.

Binds the 23S rRNA. This is Large ribosomal subunit protein bL31 from Blochmanniella floridana.